Consider the following 175-residue polypeptide: Adenine phosphoribosyltransferase (175 aa).

Belongs to the purine/pyrimidine phosphoribosyltransferase family. In terms of assembly, homodimer.

The protein resides in the cytoplasm. The enzyme catalyses AMP + diphosphate = 5-phospho-alpha-D-ribose 1-diphosphate + adenine. It functions in the pathway purine metabolism; AMP biosynthesis via salvage pathway; AMP from adenine: step 1/1. Its function is as follows. Catalyzes a salvage reaction resulting in the formation of AMP, that is energically less costly than de novo synthesis. This is Adenine phosphoribosyltransferase from Nitrosospira multiformis (strain ATCC 25196 / NCIMB 11849 / C 71).